We begin with the raw amino-acid sequence, 116 residues long: Large ribosomal subunit protein uL18 (116 aa).

The protein belongs to the universal ribosomal protein uL18 family. In terms of assembly, part of the 50S ribosomal subunit; part of the 5S rRNA/L5/L18/L25 subcomplex. Contacts the 5S and 23S rRNAs.

In terms of biological role, this is one of the proteins that bind and probably mediate the attachment of the 5S RNA into the large ribosomal subunit, where it forms part of the central protuberance. This is Large ribosomal subunit protein uL18 from Alcanivorax borkumensis (strain ATCC 700651 / DSM 11573 / NCIMB 13689 / SK2).